Consider the following 567-residue polypeptide: Pyrethroid hydrolase Ces2e (567 aa).

The signal sequence occupies residues M1 to G36. At Q37 the chain carries Pyrrolidone carboxylic acid. C105 and C132 are joined by a disulfide. S237 functions as the Acyl-ester intermediate in the catalytic mechanism. Cysteines 289 and 300 form a disulfide. Active-site charge relay system residues include E354 and H465.

This sequence belongs to the type-B carboxylesterase/lipase family. Expressed in liver.

The protein resides in the microsome. The enzyme catalyses all-trans-retinyl hexadecanoate + H2O = all-trans-retinol + hexadecanoate + H(+). The catalysed reaction is (-)-trans-permethrin + H2O = (3-phenoxyphenyl)methanol + (1S,3R)-3-(2,2-dichlorovinyl)-2,2-dimethylcyclopropanecarboxylate + H(+). Carboxylesterase that catalyzes the hydrolysis of pyrethroids pesticides. Hydrolyzes trans-permethrin at a rate about 22-fold higher than cis-permethrin. Also hydrolyzes trans-cypermethrin. Hydrolyzes retinyl esters. This chain is Pyrethroid hydrolase Ces2e, found in Rattus norvegicus (Rat).